We begin with the raw amino-acid sequence, 418 residues long: Serine--tRNA ligase (418 aa).

An L-serine-binding site is contributed by 227-229 (TSE). Residues 258 to 260 (RRE) and V274 each bind ATP. Residue E281 participates in L-serine binding. Position 345–348 (345–348 (ELTS)) interacts with ATP. Residue T380 coordinates L-serine.

It belongs to the class-II aminoacyl-tRNA synthetase family. Type-1 seryl-tRNA synthetase subfamily. Homodimer. The tRNA molecule binds across the dimer.

The protein localises to the cytoplasm. The enzyme catalyses tRNA(Ser) + L-serine + ATP = L-seryl-tRNA(Ser) + AMP + diphosphate + H(+). It carries out the reaction tRNA(Sec) + L-serine + ATP = L-seryl-tRNA(Sec) + AMP + diphosphate + H(+). Its pathway is aminoacyl-tRNA biosynthesis; selenocysteinyl-tRNA(Sec) biosynthesis; L-seryl-tRNA(Sec) from L-serine and tRNA(Sec): step 1/1. Functionally, catalyzes the attachment of serine to tRNA(Ser). Is also able to aminoacylate tRNA(Sec) with serine, to form the misacylated tRNA L-seryl-tRNA(Sec), which will be further converted into selenocysteinyl-tRNA(Sec). The protein is Serine--tRNA ligase of Rhodococcus opacus (strain B4).